We begin with the raw amino-acid sequence, 93 residues long: YcgL domain-containing protein Swoo_2115 (93 aa).

Residues 1-85 (MICAVYKSRR…PVVNLLEEHK (85 aa)) enclose the YcgL domain.

The polypeptide is YcgL domain-containing protein Swoo_2115 (Shewanella woodyi (strain ATCC 51908 / MS32)).